The primary structure comprises 291 residues: Nucleotide-binding protein lwe2422 (291 aa).

13 to 20 (GMSGAGKT) lines the ATP pocket. Position 63–66 (63–66 (DLRG)) interacts with GTP.

This sequence belongs to the RapZ-like family.

Displays ATPase and GTPase activities. The polypeptide is Nucleotide-binding protein lwe2422 (Listeria welshimeri serovar 6b (strain ATCC 35897 / DSM 20650 / CCUG 15529 / CIP 8149 / NCTC 11857 / SLCC 5334 / V8)).